We begin with the raw amino-acid sequence, 1088 residues long: Exportin-T (1088 aa).

Positions 435 to 503 (KNNNNKNKNT…VKNANNIKNN (69 aa)) are enriched in low complexity. 2 disordered regions span residues 435–513 (KNNN…DDDD) and 1059–1088 (LNNNNNINNNNNNINNNGHTNGNGVNKNGH).

Belongs to the exportin family.

Its subcellular location is the nucleus. The protein resides in the cytoplasm. Mediates the nuclear export of aminoacylated tRNAs. The polypeptide is Exportin-T (xpot) (Dictyostelium discoideum (Social amoeba)).